A 616-amino-acid chain; its full sequence is Chaperone protein HscA (616 aa).

Belongs to the heat shock protein 70 family.

In terms of biological role, chaperone involved in the maturation of iron-sulfur cluster-containing proteins. Has a low intrinsic ATPase activity which is markedly stimulated by HscB. Involved in the maturation of IscU. The protein is Chaperone protein HscA of Salmonella paratyphi A (strain ATCC 9150 / SARB42).